The chain runs to 64 residues: Small ribosomal subunit protein bS21 (64 aa).

A disordered region spans residues 40–64 (PPSVKRKIKSQEAQRRMRRTKRKRF). The segment covering 55–64 (RMRRTKRKRF) has biased composition (basic residues).

It belongs to the bacterial ribosomal protein bS21 family.

This chain is Small ribosomal subunit protein bS21, found in Elusimicrobium minutum (strain Pei191).